The chain runs to 115 residues: Tail tip protein M (115 aa).

It belongs to the lambda-like tail tip protein M family.

The protein resides in the virion. The protein localises to the host cytoplasm. Its function is as follows. Part of the distal tail tip which plays a role in DNA ejection during entry, and in tail assembly initiation during exit. May bind tail tip complex associated with tape measure protein and allow tail tube protein polymerization on top of tail tip. This chain is Tail tip protein M, found in Escherichia coli (Bacteriophage N15).